A 45-amino-acid chain; its full sequence is Proteinase inhibitor IIA (45 aa).

3 disulfide bridges follow: cysteine 10-cysteine 24, cysteine 14-cysteine 35, and cysteine 20-cysteine 43.

It belongs to the protease inhibitor I20 (potato type II proteinase inhibitor) family.

The protein localises to the secreted. In terms of biological role, inhibits trypsin strongly and chymotrypsin temporarily. This Solanum tuberosum (Potato) protein is Proteinase inhibitor IIA.